The chain runs to 37 residues: Large ribosomal subunit protein bL36 (37 aa).

Belongs to the bacterial ribosomal protein bL36 family.

In Campylobacter jejuni subsp. jejuni serotype O:6 (strain 81116 / NCTC 11828), this protein is Large ribosomal subunit protein bL36.